The following is a 1083-amino-acid chain: Carbamoyl phosphate synthase large chain (1083 aa).

The tract at residues 1-402 (MPKRTDIRKV…AYMKALRSME (402 aa)) is carboxyphosphate synthetic domain. Residues Arg129, Arg169, Gly175, Gly176, Glu208, Val210, Glu215, Gly241, Val242, His243, Gln285, and Glu299 each coordinate ATP. Residues 133 to 328 (KAAMQKIGVA…IAKIAAKLAL (196 aa)) form the ATP-grasp 1 domain. Mg(2+) contacts are provided by Gln285, Glu299, and Asn301. Mn(2+) is bound by residues Gln285, Glu299, and Asn301. The segment at 403 to 554 (LGRVGLESPE…YSTYEEEDEA (152 aa)) is oligomerization domain. The tract at residues 555–937 (PPTDRQKVLI…AFAKSQLAAG (383 aa)) is carbamoyl phosphate synthetic domain. Positions 679–871 (AALIEKLGLK…MAKIAALCMV (193 aa)) constitute an ATP-grasp 2 domain. The ATP site is built by Arg715, Arg754, Leu756, Glu761, Gly787, Val788, His789, Ser790, Gln830, and Glu842. Residues Gln830, Glu842, and Asn844 each contribute to the Mg(2+) site. 3 residues coordinate Mn(2+): Gln830, Glu842, and Asn844. Residues 938–1078 (VKLPKSGKVF…QEYLGINAAP (141 aa)) enclose the MGS-like domain. Residues 938–1083 (VKLPKSGKVF…INAAPPGTRR (146 aa)) are allosteric domain.

This sequence belongs to the CarB family. As to quaternary structure, composed of two chains; the small (or glutamine) chain promotes the hydrolysis of glutamine to ammonia, which is used by the large (or ammonia) chain to synthesize carbamoyl phosphate. Tetramer of heterodimers (alpha,beta)4. Mg(2+) serves as cofactor. It depends on Mn(2+) as a cofactor.

It carries out the reaction hydrogencarbonate + L-glutamine + 2 ATP + H2O = carbamoyl phosphate + L-glutamate + 2 ADP + phosphate + 2 H(+). The enzyme catalyses hydrogencarbonate + NH4(+) + 2 ATP = carbamoyl phosphate + 2 ADP + phosphate + 2 H(+). Its pathway is amino-acid biosynthesis; L-arginine biosynthesis; carbamoyl phosphate from bicarbonate: step 1/1. It participates in pyrimidine metabolism; UMP biosynthesis via de novo pathway; (S)-dihydroorotate from bicarbonate: step 1/3. In terms of biological role, large subunit of the glutamine-dependent carbamoyl phosphate synthetase (CPSase). CPSase catalyzes the formation of carbamoyl phosphate from the ammonia moiety of glutamine, carbonate, and phosphate donated by ATP, constituting the first step of 2 biosynthetic pathways, one leading to arginine and/or urea and the other to pyrimidine nucleotides. The large subunit (synthetase) binds the substrates ammonia (free or transferred from glutamine from the small subunit), hydrogencarbonate and ATP and carries out an ATP-coupled ligase reaction, activating hydrogencarbonate by forming carboxy phosphate which reacts with ammonia to form carbamoyl phosphate. This chain is Carbamoyl phosphate synthase large chain, found in Myxococcus xanthus (strain DK1622).